Here is a 59-residue protein sequence, read N- to C-terminus: QAVRYANGYTYDIETGQVSSPYTGRVYETKGKAPFYGFGFEHPYHYYPGYYHGYPHAFY.

Pyrrolidone carboxylic acid is present on Gln-1.

In Limulus polyphemus (Atlantic horseshoe crab), this protein is Cuticle protein 7 isoform a.